Here is a 2079-residue protein sequence, read N- to C-terminus: MAEPRPGGYNYKTLLCRNIPELFLDKYVARSHFGRFGTLVNFVLRPRRMTCTVSYASEDEAARALLDGASFQGHLFDISYADNETAPAQKTEEWVDPDIQAELSALQSGWRNEYGSGKPIKKPQNGSSGSGGSSMLPAIPVGPATAPVSRDRTPAQLRDLENMMRRPAHTSEEKFSVLDARDKLLRLNRTQHKLSGATQGHCADMCPEKERVLREFQRQVAYYELQPGSDELICHERALKQYSRSSADQETPLPHELRNETALHMTMSYLMHEIMDISERQDPQSHMGDWFHFVWDRTRSIRKEITQQELCSLGAVKLVEQCARFHIHCAARLVDADPSVFDSKINAENLTKCLQTLKYMYHDLRIKGVPCPKEAEFRGYIVLLNLADANFLWDIGQLPAELQSCPEVRQAIQFYLALQDTNFVRFFQLLADKDTSYLSACILVNYFTRLRVLGLHRLIQAYRSPRKDEVSSLPLSYIAELLSFASEQEAADFVQHYGLQINEAGRVVLSRMHTVETEYKLPRQYELVEVKRVKSVGEVVSGEPLPPRDLYLNHRPHNSFDDYGMLKSIAWTAKDQLAGMQQEEMQPQMPSQPPAVSKHSDTLFKVPMQPDGTAAGFGVFAAAAVPPASSIDGFSFVLPKSRAQEFQEQAPATQQRRAQEEAKHQALQVAIAAAKKREAELMAIHEAKVAEAERVRQQKLRERQEQQRRQQQELEEQRQREQEKLQLEKERQLKLEQLFFVQQQEREAHKQTRTLELYQEIFQDTLAEICQSEFMSHSRACRSYESMLDSITRDLVERQMEQSIYELGVMRVCIRRWRKYRRTQQEKDTLFNQLPLSFGAENPEGVVNKRSMEDSLRLSRRYRLGEPCDYGKLLAGLEEHSWLKLDLWHVLDKCLPVAQPGARRFYKLLISLSGGQEGLQLNCDLDRGLLQQPQSPDARFVDGGYIRGFSQGIGLSVMKIRDDDHDWKATDLAEANGIICLIGLDDIRLLPDRLKPLLQASRCHDVAVIVQHPANTAFVQPDIPLQELCLRSFNIFRLRKSGNNRQRLMIALESAVKFLAKATERKRVGHLHQVETREYLLVNLGSELFRRLKYAAEHDTAIRSDTQLNPQRCVDLFNEAVHRLQLVAGEDLSDWPQFPEELRVFVQPLPIESSLNTNRLEHFEPGWHLPERRQRIVQLLERCKLPKMPVLPRSSSLAEAQCQWVLDYAQISQQEDCVEQIALQAIKILQYDTDDYLNFVEYLAGERMQYILRQERNPPQGIVYNTKTLKRRFLSAWYYEFREPQIYEPVPAEENAQMLEKQPSSQAEVQQLDFDEITSKAEAVLKRFHQRQDERHTLRELNRSHKSRKRRDASDHKHAMSSLVSALKAARSDYQGKSSAVCRLVAQMVEADQVKYQWTPNLTSLIDRKDASTRHQWRPHVNHSTRHARKLPVQSISFLSRCLAKKGEHAGLTSCVLSVKTRYAPKTLHGRELLIWRQSSMRPLLLPSSNLWTGVLSKRHYVPRLRPAEEDEEVERRAVPQLRITKEQSEEEEHQLQRRKDGSRLRNECSEFYLPMGEQDYSEREEENRGHRQAYVPSELMTPELATKWQTTSVTDRDRQLLNLEQQMKTQPSVRMTTQTWFSGNHRRYRSRRSGAKRYHVVSELEGWRRSSNHQPVPVFQGQPGEQEHLRHASHKASARSMPDGQERCQMVWEQKKRSPWHRTEVTNSNKVRMPRIRAAKSAVMMAQEARNKHHRLITKKLVYRPRRTVNAVQAEETEDQDTHHRHHGGGQKMSKRAPERALLKQHLADLLAVSKPEDSFRIGYQPNAPTRQLLEQGKCYVSLRREQFIHLHPVRPNSLILAVNLEVKESPRQPVTTLHRRDGAKRPRLVEDVVKPSLITVIRQSAATWDHNGRKVPAKKSNLVGMPSKEHAYQRRLVRNTSTLEAIVKAQAKPRSEPKSPSSATDYHRVASQKLPHVTSKADISKAADPFKDLDKPRIKEKEVASSWKQAYVVRSKMYDAITPYRRRAYPGKKCITKDKTDGYFLAKRSSAAAAGSSKKVKPPKQPVVSPKVQVPSVLHKKKSRESLGPQTTKTGKL.

One can recognise an RRM domain in the interval 12 to 83 (KTLLCRNIPE…HLFDISYADN (72 aa)). The tract at residues 112 to 152 (NEYGSGKPIKKPQNGSSGSGGSSMLPAIPVGPATAPVSRDR) is disordered. Positions 342 to 525 (DSKINAENLT…ETEYKLPRQY (184 aa)) constitute a PCI domain. The interval 835–1359 (PLSFGAENPE…RRDASDHKHA (525 aa)) is sufficient for Orc3 binding. Disordered stretches follow at residues 1335-1360 (RHTL…KHAM), 1755-1778 (AEET…SKRA), 1930-1963 (KAQA…TSKA), and 2032-2079 (SAAA…TGKL). A compositionally biased stretch (basic residues) spans 1764 to 1776 (HHRHHGGGQKMSK). Residues 2048–2059 (PVVSPKVQVPSV) show a composition bias toward low complexity. Positions 2070-2079 (GPQTTKTGKL) are enriched in polar residues.

The protein belongs to the SAC3 family. Component of the nuclear pore complex (NPC)-associated TREX-2/AMEX complex (anchoring and mRNA export complex), composed of e(y)2, xmas and PCID2. Within the TREX-2/ AMEX complex, interactions with e(y)2 is required for localization of e(y)2 to the nuclear periphery. Interaction between the TREX-2/AMEX complex and the ORC complex is required for ORC localization to mRNPs, and consequently mRNA export. Within the TREX-2/AMEX-ORC complex, interacts with Orc6, (via C-terminus) with Orc3, and weakly interacts with Orc4. However, another report found that the interaction with Orc3 is not direct, instead it is mediated via e(y)2. Interacts with piwi. Expressed in ovaries (at protein level). In terms of tissue distribution, detected in the testes and ovaries, with expression levels higher in oocytes than in testicular cells (at protein level). As to expression, detected in the testes and ovaries (at protein level). Detected in the testes.

It is found in the nucleus. It localises to the nucleoplasm. The protein localises to the nucleus membrane. The protein resides in the cytoplasm. Its function is as follows. Involved in mRNA export and mRNA coupled transcription activation. Component of the nuclear pore complex (NPC)-associated TREX-2/AMEX complex (anchoring and mRNA export complex) which functions in docking export-competent ribonucleoprotein particles (mRNPs) to the nuclear entrance of the nuclear pore complex (nuclear basket), thereby enabling the export of mRNAs to the cytoplasm through the nuclear pores. The TREX-2/AMEX complex also functions with the transcriptional coactivator SAGA/TFTC complex, to anchor a subset of transcription sites to the nuclear pore complex basket in order to achieve efficient transcription and export of their resulting mRNAs. Within the complex, required for localization of e(y)2 to the nuclear periphery. The polypeptide is Protein xmas (Drosophila melanogaster (Fruit fly)).